Consider the following 261-residue polypeptide: Segregation and condensation protein A (261 aa).

It belongs to the ScpA family. In terms of assembly, component of a cohesin-like complex composed of ScpA, ScpB and the Smc homodimer, in which ScpA and ScpB bind to the head domain of Smc. The presence of the three proteins is required for the association of the complex with DNA.

It localises to the cytoplasm. Its function is as follows. Participates in chromosomal partition during cell division. May act via the formation of a condensin-like complex containing Smc and ScpB that pull DNA away from mid-cell into both cell halves. This Desulfitobacterium hafniense (strain DSM 10664 / DCB-2) protein is Segregation and condensation protein A.